Here is a 118-residue protein sequence, read N- to C-terminus: Small ribosomal subunit protein uS13 (118 aa).

Positions 94–118 are disordered; the sequence is SLPLRGQRTKTNARTRKGPRKPIRK.

It belongs to the universal ribosomal protein uS13 family. As to quaternary structure, part of the 30S ribosomal subunit. Forms a loose heterodimer with protein S19. Forms two bridges to the 50S subunit in the 70S ribosome.

In terms of biological role, located at the top of the head of the 30S subunit, it contacts several helices of the 16S rRNA. In the 70S ribosome it contacts the 23S rRNA (bridge B1a) and protein L5 of the 50S subunit (bridge B1b), connecting the 2 subunits; these bridges are implicated in subunit movement. Contacts the tRNAs in the A and P-sites. This is Small ribosomal subunit protein uS13 from Shewanella halifaxensis (strain HAW-EB4).